The sequence spans 226 residues: Ribose-5-phosphate isomerase A (226 aa).

Residues 28 to 31 (TGST), 83 to 86 (DGAD), and 97 to 100 (KGGG) contribute to the substrate site. Glutamate 106 (proton acceptor) is an active-site residue. Residue lysine 124 participates in substrate binding.

Belongs to the ribose 5-phosphate isomerase family. In terms of assembly, homotetramer.

The catalysed reaction is aldehydo-D-ribose 5-phosphate = D-ribulose 5-phosphate. The protein operates within carbohydrate biosynthesis; D-ribose 5-phosphate biosynthesis. Its function is as follows. Catalyzes the reversible conversion of ribose-5-phosphate to ribulose 5-phosphate. This Methanocaldococcus jannaschii (strain ATCC 43067 / DSM 2661 / JAL-1 / JCM 10045 / NBRC 100440) (Methanococcus jannaschii) protein is Ribose-5-phosphate isomerase A.